A 110-amino-acid polypeptide reads, in one-letter code: Large ribosomal subunit protein uL22 (110 aa).

Belongs to the universal ribosomal protein uL22 family. Part of the 50S ribosomal subunit.

Functionally, this protein binds specifically to 23S rRNA; its binding is stimulated by other ribosomal proteins, e.g. L4, L17, and L20. It is important during the early stages of 50S assembly. It makes multiple contacts with different domains of the 23S rRNA in the assembled 50S subunit and ribosome. Its function is as follows. The globular domain of the protein is located near the polypeptide exit tunnel on the outside of the subunit, while an extended beta-hairpin is found that lines the wall of the exit tunnel in the center of the 70S ribosome. The sequence is that of Large ribosomal subunit protein uL22 from Shigella flexneri serotype 5b (strain 8401).